The sequence spans 650 residues: Threonine--tRNA ligase (650 aa).

In terms of domain architecture, TGS spans 5–67 (NKSMFIKLKD…QEGDQVILWG (63 aa)). The tract at residues 246-537 (DHKLLGAKLD…LIEHYVGKFP (292 aa)) is catalytic. Residues cysteine 337, histidine 388, and histidine 514 each coordinate Zn(2+).

The protein belongs to the class-II aminoacyl-tRNA synthetase family. As to quaternary structure, homodimer. It depends on Zn(2+) as a cofactor.

The protein localises to the cytoplasm. It carries out the reaction tRNA(Thr) + L-threonine + ATP = L-threonyl-tRNA(Thr) + AMP + diphosphate + H(+). Catalyzes the attachment of threonine to tRNA(Thr) in a two-step reaction: L-threonine is first activated by ATP to form Thr-AMP and then transferred to the acceptor end of tRNA(Thr). Also edits incorrectly charged L-seryl-tRNA(Thr). The protein is Threonine--tRNA ligase of Protochlamydia amoebophila (strain UWE25).